The following is a 247-amino-acid chain: UPF0309 protein lin2794 (247 aa).

The region spanning 31 to 214 (VAESIENDGV…EKMVNDNFTP (184 aa)) is the SIS domain.

It belongs to the UPF0309 family.

The sequence is that of UPF0309 protein lin2794 from Listeria innocua serovar 6a (strain ATCC BAA-680 / CLIP 11262).